The primary structure comprises 148 residues: Large ribosomal subunit protein bL9 (148 aa).

This sequence belongs to the bacterial ribosomal protein bL9 family.

Its function is as follows. Binds to the 23S rRNA. The polypeptide is Large ribosomal subunit protein bL9 (Ruminiclostridium cellulolyticum (strain ATCC 35319 / DSM 5812 / JCM 6584 / H10) (Clostridium cellulolyticum)).